The chain runs to 348 residues: Dihydroorotase (348 aa).

Zn(2+) contacts are provided by His17 and His19. Substrate-binding positions include 19-21 and Asn45; that span reads HLR. 3 residues coordinate Zn(2+): Lys103, His140, and His178. The residue at position 103 (Lys103) is an N6-carboxylysine. Position 140 (His140) interacts with substrate. Leu223 is a substrate binding site. Asp251 contributes to the Zn(2+) binding site. Asp251 is an active-site residue. Positions 255 and 267 each coordinate substrate.

The protein belongs to the metallo-dependent hydrolases superfamily. DHOase family. Class II DHOase subfamily. As to quaternary structure, homodimer. Zn(2+) serves as cofactor. The cofactor is Co(2+). Mg(2+) is required as a cofactor. It depends on Ni(2+) as a cofactor.

It catalyses the reaction (S)-dihydroorotate + H2O = N-carbamoyl-L-aspartate + H(+). It participates in pyrimidine metabolism; UMP biosynthesis via de novo pathway; (S)-dihydroorotate from bicarbonate: step 3/3. Catalyzes the reversible cyclization of carbamoyl aspartate to dihydroorotate. The sequence is that of Dihydroorotase from Klebsiella pneumoniae subsp. pneumoniae (strain ATCC 700721 / MGH 78578).